The following is a 420-amino-acid chain: Serine--tRNA ligase (420 aa).

Thr-229 to Glu-231 provides a ligand contact to L-serine. Arg-260–Glu-262 lines the ATP pocket. Glu-283 serves as a coordination point for L-serine. Residue Glu-347 to Ser-350 coordinates ATP. Ser-382 contacts L-serine.

Belongs to the class-II aminoacyl-tRNA synthetase family. Type-1 seryl-tRNA synthetase subfamily. Homodimer. The tRNA molecule binds across the dimer.

The protein resides in the cytoplasm. It catalyses the reaction tRNA(Ser) + L-serine + ATP = L-seryl-tRNA(Ser) + AMP + diphosphate + H(+). It carries out the reaction tRNA(Sec) + L-serine + ATP = L-seryl-tRNA(Sec) + AMP + diphosphate + H(+). The protein operates within aminoacyl-tRNA biosynthesis; selenocysteinyl-tRNA(Sec) biosynthesis; L-seryl-tRNA(Sec) from L-serine and tRNA(Sec): step 1/1. In terms of biological role, catalyzes the attachment of serine to tRNA(Ser). Is also able to aminoacylate tRNA(Sec) with serine, to form the misacylated tRNA L-seryl-tRNA(Sec), which will be further converted into selenocysteinyl-tRNA(Sec). This is Serine--tRNA ligase from Caldicellulosiruptor bescii (strain ATCC BAA-1888 / DSM 6725 / KCTC 15123 / Z-1320) (Anaerocellum thermophilum).